A 244-amino-acid polypeptide reads, in one-letter code: uncharacterized protein (244 aa).

Residues 1–19 form the signal peptide; it reads MRGIFFLILILNFIGLIFS. Residues asparagine 45 and asparagine 77 are each glycosylated (N-linked (GlcNAc...) asparagine). 2 ShKT domains span residues 67–105 and 113–149; these read CNNP…CGKC and CSDK…CNRC. Disulfide bonds link cysteine 113–cysteine 149, cysteine 122–cysteine 142, and cysteine 129–cysteine 146. Residues asparagine 152 and asparagine 158 are each glycosylated (N-linked (GlcNAc...) asparagine). 2 consecutive ShKT domains span residues 171 to 205 and 208 to 243; these read CTDL…CNAC and CEDA…CNIC. 6 cysteine pairs are disulfide-bonded: cysteine 171-cysteine 205, cysteine 178-cysteine 198, cysteine 185-cysteine 202, cysteine 208-cysteine 243, cysteine 215-cysteine 236, and cysteine 224-cysteine 240.

This is an uncharacterized protein from Caenorhabditis elegans.